A 159-amino-acid polypeptide reads, in one-letter code: Keratin-associated protein 11-1 (159 aa).

A run of 4 repeats spans residues 107–116, 117–126, 127–136, and 137–146. The interval 107–146 is 4 X 10 AA approximate repeats; the sequence is CQPLSGVSTVCKPVRSISTVCQPVGGVSTICQPTCGVSRT.

Belongs to the PMG family. In terms of tissue distribution, wool.

Its function is as follows. In the wool cortex, wool keratin intermediate filaments are embedded in an interfilamentous matrix, consisting of wool keratin-associated proteins (KRTAP), which are essential for the formation of a rigid and resistant wool shaft through their extensive disulfide bond cross-linking with abundant cysteine residues of wool keratins. The matrix proteins include the high-sulfur and high-glycine-tyrosine keratins. The chain is Keratin-associated protein 11-1 (KRTAP11-1) from Capra hircus (Goat).